Reading from the N-terminus, the 70-residue chain is Small ribosomal subunit protein bS21 (70 aa).

Belongs to the bacterial ribosomal protein bS21 family.

This chain is Small ribosomal subunit protein bS21, found in Nitrosospira multiformis (strain ATCC 25196 / NCIMB 11849 / C 71).